Consider the following 406-residue polypeptide: MNAPAKPNDYSAYPDAEGRFGGFGGRYVAETLMPLVLDLGKAYADAKADPEFQAQLKSYNTHYAGRPSPLYFAERLTEHFGGAKIYFKRDELNHTGSHKINNALGQILLAMRMGKTRIIAETGAGQHGVATATVCARFGLPCVVYMGATDVERQKPNVFRMNLLGAEVRPVSSGTGTLKDAMNEAMRDWVTNVHDTYYLIGTAAGPHPYPVMVRDFQSVIGAEAREQILEMEGRLPDAVVACIGGGSNAIGLFHPFLGDEGVRLIGVEAAGHGVSTDKHAASLTGGRPGVLHGNRTYLLQDDDGQIIDAHSISAGLDYPGIGPEHSFLHDIGRAEYVSTTDTEALEAFKLCSTLEGIIPALEPAHALARVGEIAQELGKGKIVVMNLCGRGDKDIFTVAEALGRKI.

The residue at position 99 (Lys-99) is an N6-(pyridoxal phosphate)lysine.

The protein belongs to the TrpB family. As to quaternary structure, tetramer of two alpha and two beta chains. Pyridoxal 5'-phosphate serves as cofactor.

The enzyme catalyses (1S,2R)-1-C-(indol-3-yl)glycerol 3-phosphate + L-serine = D-glyceraldehyde 3-phosphate + L-tryptophan + H2O. It functions in the pathway amino-acid biosynthesis; L-tryptophan biosynthesis; L-tryptophan from chorismate: step 5/5. Functionally, the beta subunit is responsible for the synthesis of L-tryptophan from indole and L-serine. The chain is Tryptophan synthase beta chain (trpB) from Caulobacter vibrioides (strain ATCC 19089 / CIP 103742 / CB 15) (Caulobacter crescentus).